The chain runs to 321 residues: Cytochrome c biogenesis protein CcsA (321 aa).

The next 8 helical transmembrane spans lie at 17–37 (VVSI…FVGL), 48–68 (TFFC…HLPI), 71–91 (LYES…VPYF), 98–118 (LSTI…WGLL), 143–163 (MVSG…LLVI), 225–245 (ILSI…VWAN), 259–273 (TWAF…IYFH), and 286–306 (AIVA…VNLL).

This sequence belongs to the CcmF/CycK/Ccl1/NrfE/CcsA family. In terms of assembly, may interact with Ccs1.

Its subcellular location is the plastid. It localises to the chloroplast thylakoid membrane. Functionally, required during biogenesis of c-type cytochromes (cytochrome c6 and cytochrome f) at the step of heme attachment. The protein is Cytochrome c biogenesis protein CcsA of Populus trichocarpa (Western balsam poplar).